We begin with the raw amino-acid sequence, 86 residues long: Acyl carrier protein (86 aa).

Residues A2 to G82 form the Carrier domain. Position 37 is an O-(pantetheine 4'-phosphoryl)serine (S37).

The protein belongs to the acyl carrier protein (ACP) family. 4'-phosphopantetheine is transferred from CoA to a specific serine of apo-ACP by AcpS. This modification is essential for activity because fatty acids are bound in thioester linkage to the sulfhydryl of the prosthetic group.

Its subcellular location is the cytoplasm. Its pathway is lipid metabolism; fatty acid biosynthesis. Functionally, carrier of the growing fatty acid chain in fatty acid biosynthesis. In Dehalococcoides mccartyi (strain ATCC BAA-2100 / JCM 16839 / KCTC 5957 / BAV1), this protein is Acyl carrier protein.